Reading from the N-terminus, the 178-residue chain is Mediator of RNA polymerase II transcription subunit 31 (178 aa).

Residues 129–140 (EGQELEESEDEA) are compositionally biased toward acidic residues. Residues 129–178 (EGQELEESEDEADIRQKDTEDEDDEETMKKPDADTAEKNSTTSTVSKKEK) are disordered. The span at 155–165 (TMKKPDADTAE) shows a compositional bias: basic and acidic residues. The segment covering 166–178 (KNSTTSTVSKKEK) has biased composition (polar residues).

It belongs to the Mediator complex subunit 31 family. Component of the Mediator complex.

It localises to the nucleus. Component of the Mediator complex, a coactivator involved in the regulated transcription of nearly all RNA polymerase II-dependent genes. Mediator functions as a bridge to convey information from gene-specific regulatory proteins to the basal RNA polymerase II transcription machinery. Mediator is recruited to promoters by direct interactions with regulatory proteins and serves as a scaffold for the assembly of a functional preinitiation complex with RNA polymerase II and the general transcription factors. In Caenorhabditis elegans, this protein is Mediator of RNA polymerase II transcription subunit 31.